The sequence spans 1444 residues: Probable serine/threonine-protein kinase irlC (1444 aa).

Residues 335–370 (TLINNNNNNNNNNNNNNNNNNNNNNNNNNNNNNNSK) form a disordered region. The span at 338–368 (NNNNNNNNNNNNNNNNNNNNNNNNNNNNNNN) shows a compositional bias: low complexity. The SWIM-type zinc-finger motif lies at 495–529 (FTFYLSFGEIFTCSCEDYKREFSCKHMFFILLNYY). Low complexity predominate over residues 584–613 (TSPFQSINNNNNNNLNNNNNNNLNNNNNNE). 2 disordered regions span residues 584–619 (TSPF…NKFK) and 864–938 (QKEK…ITPI). Coiled coils occupy residues 593-620 (NNNN…KFKE) and 847-879 (IKAE…KSKI). Residues 864 to 876 (QKEKKKQKQKQSK) show a composition bias toward basic residues. The segment covering 885–937 (SSSSSSSSSPSTSNTTITSTTPTTTTTTTTTTTPTTTTTTTTTSSPKQKPITP) has biased composition (low complexity). Positions 981–1246 (RKEENVLGRG…IEKILLHPFF (266 aa)) constitute a Protein kinase domain. ATP is bound by residues 987 to 995 (LGRGSNGTL) and Lys-1010. Asp-1116 serves as the catalytic Proton acceptor. In terms of domain architecture, KEN spans 1279–1444 (NYQEINLKNN…LIYFNDLIIK (166 aa)).

Belongs to the protein kinase superfamily. Ser/Thr protein kinase family.

The catalysed reaction is L-seryl-[protein] + ATP = O-phospho-L-seryl-[protein] + ADP + H(+). The enzyme catalyses L-threonyl-[protein] + ATP = O-phospho-L-threonyl-[protein] + ADP + H(+). The protein is Probable serine/threonine-protein kinase irlC (irlC) of Dictyostelium discoideum (Social amoeba).